The sequence spans 311 residues: tRNA dimethylallyltransferase (311 aa).

13 to 20 (GPTASGKT) lines the ATP pocket. 15–20 (TASGKT) contributes to the substrate binding site. 2 interaction with substrate tRNA regions span residues 38 to 41 (DSMQ) and 166 to 170 (QRVLR).

The protein belongs to the IPP transferase family. In terms of assembly, monomer. It depends on Mg(2+) as a cofactor.

The enzyme catalyses adenosine(37) in tRNA + dimethylallyl diphosphate = N(6)-dimethylallyladenosine(37) in tRNA + diphosphate. Functionally, catalyzes the transfer of a dimethylallyl group onto the adenine at position 37 in tRNAs that read codons beginning with uridine, leading to the formation of N6-(dimethylallyl)adenosine (i(6)A). The chain is tRNA dimethylallyltransferase from Staphylococcus aureus (strain bovine RF122 / ET3-1).